Consider the following 609-residue polypeptide: Alpha-fetoprotein (609 aa).

Positions 1–18 (MKWVESIFLIFLLNFTES) are cleaved as a signal peptide. 3 Albumin domains span residues 19 to 210 (RTLH…ATVT), 211 to 402 (KELR…EELQ), and 403 to 601 (KYIQ…KLIS). H22 is a Cu(2+) binding site. Intrachain disulfides connect C99-C114, C113-C124, C148-C193, C192-C201, C224-C270, C269-C277, C289-C303, and C302-C313. 3 positions are modified to phosphoserine: S111, S115, and S117. N251 carries an N-linked (GlcNAc...) asparagine glycan. The residue at position 344 (S344) is a Phosphoserine. Intrachain disulfides connect C384–C393, C416–C462, C461–C472, C485–C501, C500–C511, C538–C583, and C582–C591. At S444 the chain carries Phosphoserine.

Belongs to the ALB/AFP/VDB family. As to quaternary structure, dimeric and trimeric forms have been found in addition to the monomeric form. In terms of processing, sulfated. Plasma.

It is found in the secreted. Binds copper, nickel, and fatty acids as well as, and bilirubin less well than, serum albumin. The chain is Alpha-fetoprotein (AFP) from Gorilla gorilla gorilla (Western lowland gorilla).